Here is a 212-residue protein sequence, read N- to C-terminus: NAD(P)H-hydrate epimerase (212 aa).

The region spanning 10-212 (MRSLERAAIA…IGVIVKPIGL (203 aa)) is the YjeF N-terminal domain. 65–69 (NNGGD) serves as a coordination point for (6S)-NADPHX. The K(+) site is built by asparagine 66 and aspartate 129. (6S)-NADPHX-binding positions include 133 to 139 (GLGLTRP) and aspartate 161. Serine 164 contacts K(+).

It belongs to the NnrE/AIBP family. The cofactor is K(+).

It carries out the reaction (6R)-NADHX = (6S)-NADHX. The catalysed reaction is (6R)-NADPHX = (6S)-NADPHX. Its function is as follows. Catalyzes the epimerization of the S- and R-forms of NAD(P)HX, a damaged form of NAD(P)H that is a result of enzymatic or heat-dependent hydration. This is a prerequisite for the S-specific NAD(P)H-hydrate dehydratase to allow the repair of both epimers of NAD(P)HX. In Rhodobacter capsulatus (strain ATCC BAA-309 / NBRC 16581 / SB1003), this protein is NAD(P)H-hydrate epimerase.